We begin with the raw amino-acid sequence, 145 residues long: Synaptojanin-2-binding protein (145 aa).

The Cytoplasmic segment spans residues 1–117; sequence MNGRVDYLVT…VHRGEGEPSG (117 aa). The region spanning 13–100 is the PDZ domain; sequence EINLTRGPSG…AVSLRVQHRL (88 aa). Residues 118-138 traverse the membrane as a helical; Anchor for type IV membrane protein segment; it reads VPVAMVLLPVFALTMVAVWAF. Residues 139–145 are Mitochondrial intermembrane-facing; it reads VRYRKQL.

Binds (via the PDZ domain) to isoform 2A of SYNJ2 (via the unique motif in the C-terminus). Interacts (via C-terminus) with RALBP1. Interacts (via PDZ domain) with ACVR2A (via C-terminus) and ACVR2B (via C-terminus). Forms a ternary complex with ACVR2A and RALBP1. Interacts with MAPK12. Interacts with DLL1; enhances DLL1 protein stability, and promotes notch signaling in endothelial cells. As to expression, isoform 1 and isoform 2 are widely expressed, notably in brain, heart, lung, liver, kidney, skeletal muscle, ovary and testis. Isoform 3 is detected only in heart, spleen and testis.

The protein localises to the mitochondrion outer membrane. It is found in the cytoplasm. It localises to the perinuclear region. Functionally, isoform 1 regulates endocytosis of activin type 2 receptor kinases through the Ral/RALBP1-dependent pathway and may be involved in suppression of activin-induced signal transduction. Isoform 2 and isoform 3 show a stimulatory affect on activin-induced signal transduction and enhance activin type 2 expression at the cell surface. The polypeptide is Synaptojanin-2-binding protein (Mus musculus (Mouse)).